Consider the following 211-residue polypeptide: 2,3-bisphosphoglycerate-dependent phosphoglycerate mutase (211 aa).

Substrate-binding positions include 9 to 16, 22 to 23, Arg-61, 88 to 91, Lys-99, 115 to 116, and 159 to 160; these read RHGQSDWN, TG, ERDY, RR, and GN. His-10 functions as the Tele-phosphohistidine intermediate in the catalytic mechanism. Catalysis depends on Glu-88, which acts as the Proton donor/acceptor.

The protein belongs to the phosphoglycerate mutase family. BPG-dependent PGAM subfamily. In terms of assembly, homodimer.

The catalysed reaction is (2R)-2-phosphoglycerate = (2R)-3-phosphoglycerate. Its pathway is carbohydrate degradation; glycolysis; pyruvate from D-glyceraldehyde 3-phosphate: step 3/5. Functionally, catalyzes the interconversion of 2-phosphoglycerate and 3-phosphoglycerate. The protein is 2,3-bisphosphoglycerate-dependent phosphoglycerate mutase of Rhizobium meliloti (strain 1021) (Ensifer meliloti).